Reading from the N-terminus, the 75-residue chain is Pi-hexatoxin-Hi1a (75 aa).

6 cysteine pairs are disulfide-bonded: Cys-3/Cys-18, Cys-10/Cys-23, Cys-17/Cys-33, Cys-40/Cys-55, Cys-47/Cys-60, and Cys-54/Cys-71. Domain repeat units follow at residues 3–33 (CIRKWLSCVDRKNDCCEGLECYKRRHSFEVC) and 40–71 (CLVKWKQCDGRERDCCAGLECWKRSGNKSSVC). Residues 3–71 (CIRKWLSCVD…KRSGNKSSVC (69 aa)) form a 2 X approximate repeats with cysteine pattern C-C-CC-C-C region.

This sequence belongs to the psalmotoxin-1 family. Double-knot toxin subfamily. Expressed by the venom gland.

Its subcellular location is the secreted. In terms of biological role, this toxin potently and selectively inhibits ASIC1a (IC(50)=0.4 nM on rASIC1a and IC(50)=0.52 nM on hASIC1a), an isoform of the gene ASIC1. It incompletely inhibits ASIC1a activation in a pH-independent and slowly reversible manner (Tau(off)=14.2 minutes for rASIC1a and 31.8 minutes for hASIC1a). This toxin acts by binding to and stabilizing the closed state of the channel, thereby impeding the transition into a conducting state. This toxin may bind to the acidic pocket of ASIC1a, since mutation of a key residue of this pocket (Arg-350) abolishes the ability of the toxin to inhibit ASIC1a. In addition, it shows antiparasitic activities, since it moderately inhibits the larval development of the major pathogenic nematode of ruminants (H.contortus, IC(50)=22.9 uM). In vivo, this toxin protects the brain from neuronal injury when administered up to 8 hours after stroke onset. The chain is Pi-hexatoxin-Hi1a from Hadronyche infensa (Fraser island funnel-web spider).